Here is a 1414-residue protein sequence, read N- to C-terminus: DNA-directed RNA polymerase subunit beta' (1414 aa).

4 residues coordinate Zn(2+): Cys70, Cys72, Cys85, and Cys88. Mg(2+) contacts are provided by Asp460, Asp462, and Asp464. Zn(2+) is bound by residues Cys815, Cys889, Cys896, and Cys899. Positions 1395–1414 (EAEAQFADISSTPDSDTDAS) are disordered.

It belongs to the RNA polymerase beta' chain family. The RNAP catalytic core consists of 2 alpha, 1 beta, 1 beta' and 1 omega subunit. When a sigma factor is associated with the core the holoenzyme is formed, which can initiate transcription. It depends on Mg(2+) as a cofactor. Zn(2+) is required as a cofactor.

The enzyme catalyses RNA(n) + a ribonucleoside 5'-triphosphate = RNA(n+1) + diphosphate. In terms of biological role, DNA-dependent RNA polymerase catalyzes the transcription of DNA into RNA using the four ribonucleoside triphosphates as substrates. This is DNA-directed RNA polymerase subunit beta' from Herminiimonas arsenicoxydans.